A 146-amino-acid chain; its full sequence is Small ribosomal subunit protein uS9 (146 aa).

Ser3 carries the phosphoserine modification. Lys60 is modified (N6-acetyllysine).

It belongs to the universal ribosomal protein uS9 family. As to quaternary structure, component of the small ribosomal subunit. Part of the small subunit (SSU) processome, composed of more than 70 proteins and the RNA chaperone small nucleolar RNA (snoRNA) U3.

It localises to the cytoplasm. The protein localises to the nucleus. Its subcellular location is the nucleolus. In terms of biological role, component of the small ribosomal subunit. The ribosome is a large ribonucleoprotein complex responsible for the synthesis of proteins in the cell. Part of the small subunit (SSU) processome, first precursor of the small eukaryotic ribosomal subunit. During the assembly of the SSU processome in the nucleolus, many ribosome biogenesis factors, an RNA chaperone and ribosomal proteins associate with the nascent pre-rRNA and work in concert to generate RNA folding, modifications, rearrangements and cleavage as well as targeted degradation of pre-ribosomal RNA by the RNA exosome. In Bos taurus (Bovine), this protein is Small ribosomal subunit protein uS9 (RPS16).